The chain runs to 319 residues: Aliphatic sulfonates import ATP-binding protein SsuB (319 aa).

Positions 63 to 282 constitute an ABC transporter domain; it reads VTLSGVSKRF…ARASAAFAAL (220 aa). Residue 95–102 participates in ATP binding; sequence GRSGCGKS.

Belongs to the ABC transporter superfamily. Aliphatic sulfonates importer (TC 3.A.1.17.2) family. As to quaternary structure, the complex is composed of two ATP-binding proteins (SsuB), two transmembrane proteins (SsuC) and a solute-binding protein (SsuA).

It is found in the cell inner membrane. It carries out the reaction ATP + H2O + aliphatic sulfonate-[sulfonate-binding protein]Side 1 = ADP + phosphate + aliphatic sulfonateSide 2 + [sulfonate-binding protein]Side 1.. Functionally, part of the ABC transporter complex SsuABC involved in aliphatic sulfonates import. Responsible for energy coupling to the transport system. The sequence is that of Aliphatic sulfonates import ATP-binding protein SsuB from Burkholderia ambifaria (strain ATCC BAA-244 / DSM 16087 / CCUG 44356 / LMG 19182 / AMMD) (Burkholderia cepacia (strain AMMD)).